Here is a 464-residue protein sequence, read N- to C-terminus: Cysteine--tRNA ligase (464 aa).

Zn(2+) is bound at residue Cys28. The 'HIGH' region motif lies at 30–40 (PTVYDTAHIGN). Zn(2+) is bound by residues Cys212, His237, and Glu241. The 'KMSKS' region signature appears at 270-274 (KMSKS). Lys273 provides a ligand contact to ATP.

Belongs to the class-I aminoacyl-tRNA synthetase family. As to quaternary structure, monomer. Zn(2+) serves as cofactor.

It is found in the cytoplasm. It carries out the reaction tRNA(Cys) + L-cysteine + ATP = L-cysteinyl-tRNA(Cys) + AMP + diphosphate. This chain is Cysteine--tRNA ligase, found in Wolbachia pipientis subsp. Culex pipiens (strain wPip).